Reading from the N-terminus, the 209-residue chain is Large ribosomal subunit protein uL3 (209 aa).

Positions 130–154 (RGPMSHGSKFHRAVGSMGASSDPSR) are disordered.

The protein belongs to the universal ribosomal protein uL3 family. In terms of assembly, part of the 50S ribosomal subunit. Forms a cluster with proteins L14 and L19.

Its function is as follows. One of the primary rRNA binding proteins, it binds directly near the 3'-end of the 23S rRNA, where it nucleates assembly of the 50S subunit. The chain is Large ribosomal subunit protein uL3 from Clostridium kluyveri (strain NBRC 12016).